Here is a 277-residue protein sequence, read N- to C-terminus: uncharacterized protein (277 aa).

The protein belongs to the BtpA family.

It localises to the mitochondrion. This is an uncharacterized protein from Caenorhabditis elegans.